Reading from the N-terminus, the 406-residue chain is Protein phosphatase 2C (406 aa).

The 252-residue stretch at 23–274 folds into the PPM-type phosphatase domain; the sequence is RCGSNCVNGY…DNISCMIVQF (252 aa). Residues Asp55, Gly56, Asp221, and Asp265 each coordinate Mn(2+).

The protein belongs to the PP2C family. In terms of assembly, monomer. Requires Mg(2+) as cofactor. The cofactor is Mn(2+).

It catalyses the reaction O-phospho-L-seryl-[protein] + H2O = L-seryl-[protein] + phosphate. It carries out the reaction O-phospho-L-threonyl-[protein] + H2O = L-threonyl-[protein] + phosphate. Functionally, enzyme with a broad specificity. This chain is Protein phosphatase 2C, found in Leishmania chagasi.